We begin with the raw amino-acid sequence, 475 residues long: UDP-glucosyltransferase 102 (475 aa).

UDP-alpha-D-glucose contacts are provided by residues Ser-278, 344-345 (WA), 362-370 (HCGWNSTLE), and 384-387 (YGEQ).

It belongs to the UDP-glycosyltransferase family.

It participates in secondary metabolite biosynthesis; terpenoid biosynthesis. In terms of biological role, probable component of the triterpene saponins (e.g. ginsenosides) biosynthetic pathway. No detectable activity toward protopanaxatriol (PPT). The chain is UDP-glucosyltransferase 102 (UGT102) from Panax ginseng (Korean ginseng).